We begin with the raw amino-acid sequence, 541 residues long: 2-succinyl-5-enolpyruvyl-6-hydroxy-3-cyclohexene-1-carboxylate synthase (541 aa).

The protein belongs to the TPP enzyme family. MenD subfamily. In terms of assembly, homodimer. It depends on Mg(2+) as a cofactor. Mn(2+) serves as cofactor. Thiamine diphosphate is required as a cofactor.

The catalysed reaction is isochorismate + 2-oxoglutarate + H(+) = 5-enolpyruvoyl-6-hydroxy-2-succinyl-cyclohex-3-ene-1-carboxylate + CO2. It functions in the pathway quinol/quinone metabolism; 1,4-dihydroxy-2-naphthoate biosynthesis; 1,4-dihydroxy-2-naphthoate from chorismate: step 2/7. It participates in quinol/quinone metabolism; menaquinone biosynthesis. In terms of biological role, catalyzes the thiamine diphosphate-dependent decarboxylation of 2-oxoglutarate and the subsequent addition of the resulting succinic semialdehyde-thiamine pyrophosphate anion to isochorismate to yield 2-succinyl-5-enolpyruvyl-6-hydroxy-3-cyclohexene-1-carboxylate (SEPHCHC). The sequence is that of 2-succinyl-5-enolpyruvyl-6-hydroxy-3-cyclohexene-1-carboxylate synthase from Leuconostoc mesenteroides subsp. mesenteroides (strain ATCC 8293 / DSM 20343 / BCRC 11652 / CCM 1803 / JCM 6124 / NCDO 523 / NBRC 100496 / NCIMB 8023 / NCTC 12954 / NRRL B-1118 / 37Y).